Reading from the N-terminus, the 492-residue chain is G2/mitotic-specific cyclin CLB2 (492 aa).

A disordered region spans residues 1-176 (MPQVTKTNNE…QPEVGERSQS (176 aa)). Over residues 23–33 (QESISTIKNTT) the composition is skewed to polar residues. Residues 34–58 (ISNSQHKQQTQQQISSPPQVSVTSS) are compositionally biased toward low complexity. The span at 59–83 (EGVSHVNTRQYLGDVSNQYITNAKP) shows a compositional bias: polar residues. Residues 111-135 (ASDNNNNGSTSSSSNSSNNNNNDAN) show a composition bias toward low complexity. The Cyclin N-terminal domain occupies 208-334 (EIFSYYYELE…MLTILNFDLN (127 aa)).

It belongs to the cyclin family. Cyclin AB subfamily.

Its function is as follows. 2/mitotic-specific cyclin essential for the control of the cell cycle at the G2/M (mitosis) transition. G2/M cyclins accumulate steadily during G2 and are abruptly destroyed at mitosis. Degradation is necessary for the cell to exit from mitosis. Plays a role in morphogenesis by negatively regulating polarized growth. Through binding to CDC28 regulates cytokinesis, partly by phosphorylation of the actomyosin ring component IQG1. Also involved in the phosphorylation of CDC6 and CDC54. In Candida albicans (strain SC5314 / ATCC MYA-2876) (Yeast), this protein is G2/mitotic-specific cyclin CLB2 (CLB2).